Reading from the N-terminus, the 514-residue chain is ATP synthase subunit alpha (514 aa).

170–177 contacts ATP; the sequence is GDRQTGKT.

The protein belongs to the ATPase alpha/beta chains family. F-type ATPases have 2 components, CF(1) - the catalytic core - and CF(0) - the membrane proton channel. CF(1) has five subunits: alpha(3), beta(3), gamma(1), delta(1), epsilon(1). CF(0) has three main subunits: a(1), b(2) and c(9-12). The alpha and beta chains form an alternating ring which encloses part of the gamma chain. CF(1) is attached to CF(0) by a central stalk formed by the gamma and epsilon chains, while a peripheral stalk is formed by the delta and b chains.

The protein localises to the cell inner membrane. It carries out the reaction ATP + H2O + 4 H(+)(in) = ADP + phosphate + 5 H(+)(out). In terms of biological role, produces ATP from ADP in the presence of a proton gradient across the membrane. The alpha chain is a regulatory subunit. This is ATP synthase subunit alpha from Acidithiobacillus ferridurans.